The following is a 1211-amino-acid chain: RNA helicase Mov10l1 (1211 aa).

Disordered regions lie at residues 340–385 (KENS…GENG) and 674–710 (WNHAQDTKSSGQSTSKKNRKTMTDQAEHGTEERRVGD). 2 stretches are compositionally biased toward polar residues: residues 345-372 (DENINSLNSHTKNKTSQMSESSLVNNRG) and 674-688 (WNHAQDTKSSGQSTS). A compositionally biased stretch (basic and acidic residues) spans 694 to 710 (TMTDQAEHGTEERRVGD). 770–777 (GPPGTGKT) lines the ATP pocket. The short motif at 886–889 (DEAG) is the DEAG box element. The tract at residues 1192 to 1211 (DPSYPVVPESTGPEKHQEPS) is disordered.

It belongs to the DNA2/NAM7 helicase family. SDE3 subfamily. In terms of assembly, interacts with PIWIL1. Interacts with PIWIL2. Interacts with PIWIL4. Interacts with HSPA2. Interacts with PLD6. As to expression, specifically expressed in testis.

The protein localises to the cytoplasm. The catalysed reaction is ATP + H2O = ADP + phosphate + H(+). Its function is as follows. ATP-dependent RNA helicase required during spermatogenesis to repress transposable elements and prevent their mobilization, which is essential for germline integrity. Acts via the piRNA metabolic process, which mediates the repression of transposable elements during meiosis by forming complexes composed of piRNAs and Piwi proteins and governs the methylation and subsequent repression of transposons. Involved in the primary piRNA metabolic process. Specifically binds to piRNA precursors and promotes the generation of intermediate piRNA processing fragments that are subsequently loaded to Piwi proteins. Acts via its ATP-dependent RNA helicase activity: displays 5'-3' RNA unwinding activity and probably mediates unwinding and funneling of single-stranded piRNA precursor transcripts to the endonuclease that catalyzes the first cleavage step of piRNA processing to generate piRNA intermediate fragments that are subsequently loaded to Piwi proteins. This is RNA helicase Mov10l1 from Homo sapiens (Human).